Consider the following 218-residue polypeptide: Pyridoxine/pyridoxamine 5'-phosphate oxidase (218 aa).

Residues 14-17 and K72 each bind substrate; that span reads RREY. FMN-binding positions include 67–72, 82–83, R88, K89, and Q111; these read RIVLLK and YT. The substrate site is built by Y129, R133, and S137. FMN-binding positions include 146–147 and W191; that span reads QS. 197–199 provides a ligand contact to substrate; that stretch reads RLH. Position 201 (R201) interacts with FMN.

This sequence belongs to the pyridoxamine 5'-phosphate oxidase family. In terms of assembly, homodimer. It depends on FMN as a cofactor.

It catalyses the reaction pyridoxamine 5'-phosphate + O2 + H2O = pyridoxal 5'-phosphate + H2O2 + NH4(+). It carries out the reaction pyridoxine 5'-phosphate + O2 = pyridoxal 5'-phosphate + H2O2. The protein operates within cofactor metabolism; pyridoxal 5'-phosphate salvage; pyridoxal 5'-phosphate from pyridoxamine 5'-phosphate: step 1/1. It participates in cofactor metabolism; pyridoxal 5'-phosphate salvage; pyridoxal 5'-phosphate from pyridoxine 5'-phosphate: step 1/1. In terms of biological role, catalyzes the oxidation of either pyridoxine 5'-phosphate (PNP) or pyridoxamine 5'-phosphate (PMP) into pyridoxal 5'-phosphate (PLP). The sequence is that of Pyridoxine/pyridoxamine 5'-phosphate oxidase from Salmonella paratyphi B (strain ATCC BAA-1250 / SPB7).